A 157-amino-acid chain; its full sequence is Ribonuclease H (157 aa).

The RNase H type-1 domain maps to 3–144; sequence ELKQLYIFTD…CDVLARKAAE (142 aa). The Mg(2+) site is built by aspartate 12, glutamate 50, aspartate 72, and aspartate 136.

It belongs to the RNase H family. Monomer. It depends on Mg(2+) as a cofactor.

The protein localises to the cytoplasm. The enzyme catalyses Endonucleolytic cleavage to 5'-phosphomonoester.. Endonuclease that specifically degrades the RNA of RNA-DNA hybrids. In Shewanella frigidimarina (strain NCIMB 400), this protein is Ribonuclease H.